Reading from the N-terminus, the 358-residue chain is NADH-quinone oxidoreductase subunit H (358 aa).

The next 8 membrane-spanning stretches (helical) occupy residues I20–I40, A95–I115, I128–G148, I168–M188, V206–V226, G253–L273, W290–Y310, and V334–L354.

The protein belongs to the complex I subunit 1 family. NDH-1 is composed of 14 different subunits. Subunits NuoA, H, J, K, L, M, N constitute the membrane sector of the complex.

The protein localises to the cell inner membrane. It catalyses the reaction a quinone + NADH + 5 H(+)(in) = a quinol + NAD(+) + 4 H(+)(out). Functionally, NDH-1 shuttles electrons from NADH, via FMN and iron-sulfur (Fe-S) centers, to quinones in the respiratory chain. The immediate electron acceptor for the enzyme in this species is believed to be ubiquinone. Couples the redox reaction to proton translocation (for every two electrons transferred, four hydrogen ions are translocated across the cytoplasmic membrane), and thus conserves the redox energy in a proton gradient. This subunit may bind ubiquinone. The sequence is that of NADH-quinone oxidoreductase subunit H from Neisseria meningitidis serogroup A / serotype 4A (strain DSM 15465 / Z2491).